Reading from the N-terminus, the 143-residue chain is ATP synthase subunit b', chloroplastic (143 aa).

A helical transmembrane segment spans residues 12-31 (LPVMGLQVVLLSWLLEQILY).

It belongs to the ATPase B chain family. F-type ATPases have 2 components, F(1) - the catalytic core - and F(0) - the membrane proton channel. F(1) has five subunits: alpha(3), beta(3), gamma(1), delta(1), epsilon(1). F(0) has four main subunits: a(1), b(1), b'(1) and c(10-14). The alpha and beta chains form an alternating ring which encloses part of the gamma chain. F(1) is attached to F(0) by a central stalk formed by the gamma and epsilon chains, while a peripheral stalk is formed by the delta, b and b' chains.

It localises to the plastid. Its subcellular location is the chloroplast thylakoid membrane. Its function is as follows. F(1)F(0) ATP synthase produces ATP from ADP in the presence of a proton or sodium gradient. F-type ATPases consist of two structural domains, F(1) containing the extramembraneous catalytic core and F(0) containing the membrane proton channel, linked together by a central stalk and a peripheral stalk. During catalysis, ATP synthesis in the catalytic domain of F(1) is coupled via a rotary mechanism of the central stalk subunits to proton translocation. Functionally, component of the F(0) channel, it forms part of the peripheral stalk, linking F(1) to F(0). The b'-subunit is a diverged and duplicated form of b found in plants and photosynthetic bacteria. This Cyanidioschyzon merolae (strain NIES-3377 / 10D) (Unicellular red alga) protein is ATP synthase subunit b', chloroplastic.